The primary structure comprises 689 residues: MGKNFLLEIGTEEMPAHFIDPAIRQMYDFSLEYFKNKKISLESVKIWATPRRLVVYIENLGEKQEAQEEEIRGPAAHIGYKDGMWTEVAKRFVEQYGASLEDLHIEETPKGKYIFLRKVKEGMNTLEILPDYITSLLKSIRFPKMMKWGDVDFYFGRPIRWIVALYGDTEIEVEIAGVKSSRYSRPPRFLPQIPIEIRDADSYLNVMRENYIIVDQEERKNEILKQINKIANENSFILDYEDDLLKEVNYLVEYPTALLGEFDKKYLALPEVVLIITMEKKQRYFPLRDADGNLTNKFIVIRNGTDNYKDIVIQGNEKVLKARLSDAEYYYHEDTKHPLEKYTEKLSGIIFQEQLGTIKDKVERVRILVREIANILGLSSEENKILERSVNLYKADLGTLMVSEYPELHGIMGRIYAKISGEKDPIPEVIGEYIYPRTLDDRLPSNFLASILGIADRIDSLTGYFALDLFPTGSEDPIGLRRISGGLLRLLLESSLKLNLRNLFVKSFEIYNFGEKYPLSQIDKGMGFIGQRLRNLLLDRYSIDIVDAVMEVGYDEMWRLKRRLDFISKFKEKESYEKLKKALNRLYRILPKDFTPKEVSENLLSSPFEKKLYEDYLKIKNEIFNDILEGNYEVLLSYDFLNEFSDDIEKFFDNVLVMSPNEDERINRLSLLSLIKLLFWEILDWSRLS.

It belongs to the class-II aminoacyl-tRNA synthetase family. Tetramer of two alpha and two beta subunits.

Its subcellular location is the cytoplasm. It carries out the reaction tRNA(Gly) + glycine + ATP = glycyl-tRNA(Gly) + AMP + diphosphate. The sequence is that of Glycine--tRNA ligase beta subunit from Dictyoglomus thermophilum (strain ATCC 35947 / DSM 3960 / H-6-12).